The chain runs to 403 residues: Flavohemoprotein (403 aa).

A Globin domain is found at 1–138; it reads MLTQKTKDIV…LADILAGMES (138 aa). His-85 contributes to the heme b binding site. Catalysis depends on charge relay system residues Tyr-95 and Glu-137. The interval 149–403 is reductase; the sequence is GGWAGWRRFI…EVFGPDLFAE (255 aa). The region spanning 152–262 is the FAD-binding FR-type domain; that stretch reads AGWRRFIVRE…AAPYGNFYID (111 aa). Residues Tyr-190 and 206–209 contribute to the FAD site; that span reads RQYS. Residue 275-280 participates in NADP(+) binding; the sequence is GVGLTP. An FAD-binding site is contributed by 395-398; that stretch reads VFGP.

It belongs to the globin family. Two-domain flavohemoproteins subfamily. This sequence in the C-terminal section; belongs to the flavoprotein pyridine nucleotide cytochrome reductase family. Heme b is required as a cofactor. The cofactor is FAD.

The catalysed reaction is 2 nitric oxide + NADPH + 2 O2 = 2 nitrate + NADP(+) + H(+). The enzyme catalyses 2 nitric oxide + NADH + 2 O2 = 2 nitrate + NAD(+) + H(+). Functionally, is involved in NO detoxification in an aerobic process, termed nitric oxide dioxygenase (NOD) reaction that utilizes O(2) and NAD(P)H to convert NO to nitrate, which protects the bacterium from various noxious nitrogen compounds. Therefore, plays a central role in the inducible response to nitrosative stress. The chain is Flavohemoprotein from Rhizobium meliloti (strain 1021) (Ensifer meliloti).